The sequence spans 1063 residues: DNA-directed RNA polymerase subunit beta (1063 aa).

Belongs to the RNA polymerase beta chain family. In plastids the minimal PEP RNA polymerase catalytic core is composed of four subunits: alpha, beta, beta', and beta''. When a (nuclear-encoded) sigma factor is associated with the core the holoenzyme is formed, which can initiate transcription.

The protein resides in the plastid. Its subcellular location is the chloroplast. The enzyme catalyses RNA(n) + a ribonucleoside 5'-triphosphate = RNA(n+1) + diphosphate. Functionally, DNA-dependent RNA polymerase catalyzes the transcription of DNA into RNA using the four ribonucleoside triphosphates as substrates. The protein is DNA-directed RNA polymerase subunit beta of Zygnema circumcarinatum (Green alga).